The chain runs to 156 residues: Small ribosomal subunit protein uS7 (156 aa).

The protein belongs to the universal ribosomal protein uS7 family. In terms of assembly, part of the 30S ribosomal subunit. Contacts proteins S9 and S11.

Its function is as follows. One of the primary rRNA binding proteins, it binds directly to 16S rRNA where it nucleates assembly of the head domain of the 30S subunit. Is located at the subunit interface close to the decoding center, probably blocks exit of the E-site tRNA. The polypeptide is Small ribosomal subunit protein uS7 (Aromatoleum aromaticum (strain DSM 19018 / LMG 30748 / EbN1) (Azoarcus sp. (strain EbN1))).